A 303-amino-acid polypeptide reads, in one-letter code: Formylglycine-generating enzyme (303 aa).

Residues Asn188, Ile189, Asp202, Tyr204, Asn222, Val223, Gly225, and Val227 each coordinate Ca(2+). Residues Cys269 and Cys274 each contribute to the Cu(+) site.

The protein belongs to the sulfatase-modifying factor family. The cofactor is Cu(+).

The enzyme catalyses L-cysteinyl-[sulfatase] + 2 a thiol + O2 = an organic disulfide + 3-oxo-L-alanyl-[sulfatase] + hydrogen sulfide + H2O + H(+). Its pathway is protein modification; sulfatase oxidation. In terms of biological role, oxidase that catalyzes the conversion of cysteine to 3-oxoalanine on target proteins. 3-oxoalanine modification, which is also named formylglycine (fGly), occurs in the maturation of arylsulfatases and some alkaline phosphatases that use the hydrated form of 3-oxoalanine as a catalytic nucleophile. This Thermomonospora curvata (strain ATCC 19995 / DSM 43183 / JCM 3096 / KCTC 9072 / NBRC 15933 / NCIMB 10081 / Henssen B9) protein is Formylglycine-generating enzyme.